A 106-amino-acid chain; its full sequence is Transcription initiation factor IIA subunit 2 (106 aa).

This sequence belongs to the TFIIA subunit 2 family. In terms of assembly, TFIIA is a heterodimer of the large unprocessed subunit 1 and a small subunit gamma. It was originally believed to be a heterotrimer of an alpha (p30), a beta (p20) and a gamma (p14) subunit. Forms a complex with Moonshiner/CG12721 and Trf2. In terms of tissue distribution, ubiquitous.

It localises to the nucleus. In terms of biological role, TFIIA is a component of the transcription machinery of RNA polymerase II and plays an important role in transcriptional activation. TFIIA in a complex with TBP mediates transcriptional activity. Part of a rhi-dependent transcription machinery that enables the generation of piRNA precursors from heterochromatin while maintaining the suppression of transposon-encoded promoters and enhancers. Forms a complex with Moonshiner/CG12721 and Trf2 which recruit transcriptional machinery to heterochromatin to initiate the bidirectional transcription of piRNA clusters, by interacting with the RDC (rhi, del and cuff) complex that binds to repressive H3K9me3 marks in the chromatin. This mechanism allows transcription to occur in piRNA clusters despite the lack of proper promoter elements and in the presence of the repressive H3K9me3 mark. The sequence is that of Transcription initiation factor IIA subunit 2 (TfIIA-S) from Drosophila melanogaster (Fruit fly).